We begin with the raw amino-acid sequence, 834 residues long: Leucine--tRNA ligase (834 aa).

Residues P42 to H52 carry the 'HIGH' region motif. The 'KMSKS' region motif lies at K619 to S623. K622 provides a ligand contact to ATP.

The protein belongs to the class-I aminoacyl-tRNA synthetase family.

It is found in the cytoplasm. The enzyme catalyses tRNA(Leu) + L-leucine + ATP = L-leucyl-tRNA(Leu) + AMP + diphosphate. This Actinobacillus pleuropneumoniae serotype 7 (strain AP76) protein is Leucine--tRNA ligase.